We begin with the raw amino-acid sequence, 431 residues long: UPF0597 protein LCA_0156 (431 aa).

It belongs to the UPF0597 family.

In Latilactobacillus sakei subsp. sakei (strain 23K) (Lactobacillus sakei subsp. sakei), this protein is UPF0597 protein LCA_0156.